Consider the following 101-residue polypeptide: Apolipoprotein C-II (101 aa).

A signal peptide spans 1-22 (MGIRYLLVLVLVLLVLGCEVQG). Positions 66–74 (TVDEKIREI) are lipid binding. Positions 78 to 101 (STAAVSTYAGIFTDQLLSMLKGDQ) are lipoprotein lipase cofactor.

It belongs to the apolipoprotein C2 family. Proapolipoprotein C-II is synthesized as a sialic acid containing glycoprotein which is subsequently desialylated prior to its proteolytic processing. In terms of processing, proapolipoprotein C-II, the major form found in plasma undergoes proteolytic cleavage of its N-terminal hexapeptide to generate apolipoprotein C-II, which occurs as the minor form in plasma.

Its subcellular location is the secreted. In terms of biological role, component of chylomicrons, very low-density lipoproteins (VLDL), low-density lipoproteins (LDL), and high-density lipoproteins (HDL) in plasma. Plays an important role in lipoprotein metabolism as an activator of lipoprotein lipase. Both proapolipoprotein C-II and apolipoprotein C-II can activate lipoprotein lipase. The chain is Apolipoprotein C-II (APOC2) from Mirounga angustirostris (Northern elephant seal).